Here is a 209-residue protein sequence, read N- to C-terminus: Large ribosomal subunit protein uL3 (209 aa).

The disordered stretch occupies residues 141–163 (RAVGSMGASSDPSRTFKNKRMPG).

This sequence belongs to the universal ribosomal protein uL3 family. In terms of assembly, part of the 50S ribosomal subunit. Forms a cluster with proteins L14 and L19.

In terms of biological role, one of the primary rRNA binding proteins, it binds directly near the 3'-end of the 23S rRNA, where it nucleates assembly of the 50S subunit. The sequence is that of Large ribosomal subunit protein uL3 from Clostridium botulinum (strain Langeland / NCTC 10281 / Type F).